The following is an 89-amino-acid chain: Small ribosomal subunit protein bS16 (89 aa).

It belongs to the bacterial ribosomal protein bS16 family.

This chain is Small ribosomal subunit protein bS16, found in Desulforamulus reducens (strain ATCC BAA-1160 / DSM 100696 / MI-1) (Desulfotomaculum reducens).